A 380-amino-acid chain; its full sequence is 3-dehydroquinate synthase (380 aa).

Belongs to the archaeal-type DHQ synthase family.

The catalysed reaction is 2-amino-2,3,7-trideoxy-D-lyxo-hept-6-ulosonate + NAD(+) + H2O = 3-dehydroquinate + NH4(+) + NADH + H(+). In terms of biological role, catalyzes the oxidative deamination and cyclization of 2-amino-3,7-dideoxy-D-threo-hept-6-ulosonic acid (ADH) to yield 3-dehydroquinate (DHQ), which is fed into the canonical shikimic pathway of aromatic amino acid biosynthesis. The sequence is that of 3-dehydroquinate synthase from Methanosarcina acetivorans (strain ATCC 35395 / DSM 2834 / JCM 12185 / C2A).